A 232-amino-acid chain; its full sequence is Ornithine carbamoyltransferase (232 aa).

Residues Gln15, Arg39, and 66 to 69 each bind carbamoyl phosphate; that span reads HPTQ. Residues Asn99, Asp163, and 167 to 168 each bind L-ornithine; that span reads SM. Residues 204-207 and Thr232 each bind carbamoyl phosphate; that span reads HCLP.

It belongs to the aspartate/ornithine carbamoyltransferase superfamily. OTCase family.

It is found in the cytoplasm. It carries out the reaction carbamoyl phosphate + L-ornithine = L-citrulline + phosphate + H(+). It participates in amino-acid biosynthesis; L-arginine biosynthesis; L-arginine from L-ornithine and carbamoyl phosphate: step 1/3. Reversibly catalyzes the transfer of the carbamoyl group from carbamoyl phosphate (CP) to the N(epsilon) atom of ornithine (ORN) to produce L-citrulline. The protein is Ornithine carbamoyltransferase (argF) of Neisseria flava.